The sequence spans 160 residues: Ribosome maturation factor RimP (160 aa).

It belongs to the RimP family.

Its subcellular location is the cytoplasm. In terms of biological role, required for maturation of 30S ribosomal subunits. This Citrifermentans bemidjiense (strain ATCC BAA-1014 / DSM 16622 / JCM 12645 / Bem) (Geobacter bemidjiensis) protein is Ribosome maturation factor RimP.